A 526-amino-acid polypeptide reads, in one-letter code: Peptide chain release factor 3 (526 aa).

One can recognise a tr-type G domain in the interval 9–277 (DKRRTFAIIS…GIVEWAPKPL (269 aa)). GTP contacts are provided by residues 18–25 (SHPDAGKT), 86–90 (DTPGH), and 140–143 (NKCD).

The protein belongs to the TRAFAC class translation factor GTPase superfamily. Classic translation factor GTPase family. PrfC subfamily.

It is found in the cytoplasm. Its function is as follows. Increases the formation of ribosomal termination complexes and stimulates activities of RF-1 and RF-2. It binds guanine nucleotides and has strong preference for UGA stop codons. It may interact directly with the ribosome. The stimulation of RF-1 and RF-2 is significantly reduced by GTP and GDP, but not by GMP. This Shewanella frigidimarina (strain NCIMB 400) protein is Peptide chain release factor 3.